We begin with the raw amino-acid sequence, 120 residues long: Large ribosomal subunit protein bL20 (120 aa).

It belongs to the bacterial ribosomal protein bL20 family.

Its function is as follows. Binds directly to 23S ribosomal RNA and is necessary for the in vitro assembly process of the 50S ribosomal subunit. It is not involved in the protein synthesizing functions of that subunit. In Cereibacter sphaeroides (strain ATCC 17029 / ATH 2.4.9) (Rhodobacter sphaeroides), this protein is Large ribosomal subunit protein bL20.